Here is a 330-residue protein sequence, read N- to C-terminus: tRNA pseudouridine synthase B (330 aa).

Asp-42 acts as the Nucleophile in catalysis.

The protein belongs to the pseudouridine synthase TruB family. Type 1 subfamily.

The catalysed reaction is uridine(55) in tRNA = pseudouridine(55) in tRNA. Responsible for synthesis of pseudouridine from uracil-55 in the psi GC loop of transfer RNAs. The chain is tRNA pseudouridine synthase B from Lactococcus lactis subsp. cremoris (strain MG1363).